The primary structure comprises 158 residues: UPF0266 membrane protein YobD (158 aa).

3 helical membrane passes run 6-26 (LVLI…QFIM), 45-65 (IDSV…VTNH), and 67-87 (ALIT…IFWI).

This sequence belongs to the UPF0266 family.

Its subcellular location is the cell inner membrane. The polypeptide is UPF0266 membrane protein YobD (Shigella boydii serotype 4 (strain Sb227)).